The chain runs to 138 residues: Odorant-binding protein 22 (138 aa).

Positions 1 to 16 are cleaved as a signal peptide; the sequence is MKVFIAVFALIAVAAA. (5Z,8Z,11Z,14Z)-eicosatetraenoate is bound at residue arginine 30. 2 residues coordinate (9Z)-hexadecenoate: arginine 30 and tyrosine 61. Positions 30 and 61 each coordinate (9Z,12Z)-octadecadienoate. 3 cysteine pairs are disulfide-bonded: cysteine 33-cysteine 64, cysteine 60-cysteine 113, and cysteine 103-cysteine 122. Residue asparagine 127 is glycosylated (N-linked (GlcNAc...) asparagine).

This sequence belongs to the PBP/GOBP family. Monomer in solution. As to expression, high-level expression in female mouth parts, particularly in the proboscis (at protein level). Moderate-level expression in female antenna (at protein level). Expressed in testis but not in the accessory gland or ejaculatory duct (at protein level). Expressed in spermathecae (at protein level). Female salivary gland. Female chemosensory organs: antenna, palp and proboscis. Not detected in midgut.

Its subcellular location is the secreted. Involved in modulation of blood-feeding behavior and capacity in female mosquitoes. Required for normal oviposition. Required for normal fecundity and fertility of female and male mosquitoes. Required for normal expression of VGA1 gene, which encodes the egg yolk protein vitellogenin-A1. Involved in regulation of spermatozoa development. Required for normal female longevity when mosquitoes are maintained on regular sugar meal. Binds long chain fatty acids. Its function is as follows. (Microbial infection) Facilitates shedding of dengue virus type 2 particles into mosquito saliva. Does not affect dengue virus type 2 replication or infection prevalence in midgut and salivary glands at 14 days after blood feeding. Functionally, (Microbial infection) Facilitates shedding of Zika virus particles into mosquito saliva. Does not affect Zika virus replication or infection prevalence in midgut and salivary glands at 14 days after blood feeding. In Aedes aegypti (Yellowfever mosquito), this protein is Odorant-binding protein 22.